The chain runs to 265 residues: Type II pantothenate kinase (265 aa).

Residue 6–13 (DAGGTLIK) coordinates ATP. Glu-70 serves as the catalytic Proton acceptor. ATP is bound by residues Thr-99, 121–125 (GGMIQ), Tyr-137, and Ser-225.

Belongs to the type II pantothenate kinase family. In terms of assembly, homodimer.

It localises to the cytoplasm. The catalysed reaction is (R)-pantothenate + ATP = (R)-4'-phosphopantothenate + ADP + H(+). It participates in cofactor biosynthesis; coenzyme A biosynthesis; CoA from (R)-pantothenate: step 1/5. Its function is as follows. Catalyzes the phosphorylation of pantothenate (Pan), the first step in CoA biosynthesis. The chain is Type II pantothenate kinase from Staphylococcus epidermidis (strain ATCC 35984 / DSM 28319 / BCRC 17069 / CCUG 31568 / BM 3577 / RP62A).